The following is a 611-amino-acid chain: tRNA uridine 5-carboxymethylaminomethyl modification enzyme MnmG (611 aa).

FAD contacts are provided by residues 8–13 (GAGHAG), Val-120, and Ser-175. 268-282 (GPRYCPSIEDKIVRF) contacts NAD(+). Gln-365 is a binding site for FAD.

Belongs to the MnmG family. In terms of assembly, homodimer. Heterotetramer of two MnmE and two MnmG subunits. Requires FAD as cofactor.

Its subcellular location is the cytoplasm. NAD-binding protein involved in the addition of a carboxymethylaminomethyl (cmnm) group at the wobble position (U34) of certain tRNAs, forming tRNA-cmnm(5)s(2)U34. This Mycoplasmoides gallisepticum (strain R(low / passage 15 / clone 2)) (Mycoplasma gallisepticum) protein is tRNA uridine 5-carboxymethylaminomethyl modification enzyme MnmG.